The following is a 218-amino-acid chain: Transaldolase (218 aa).

K83 acts as the Schiff-base intermediate with substrate in catalysis.

This sequence belongs to the transaldolase family. Type 3B subfamily.

The protein resides in the cytoplasm. The enzyme catalyses D-sedoheptulose 7-phosphate + D-glyceraldehyde 3-phosphate = D-erythrose 4-phosphate + beta-D-fructose 6-phosphate. It participates in carbohydrate degradation; pentose phosphate pathway; D-glyceraldehyde 3-phosphate and beta-D-fructose 6-phosphate from D-ribose 5-phosphate and D-xylulose 5-phosphate (non-oxidative stage): step 2/3. Functionally, transaldolase is important for the balance of metabolites in the pentose-phosphate pathway. Does not show fructose-6-P aldolase activity. In Thermotoga maritima (strain ATCC 43589 / DSM 3109 / JCM 10099 / NBRC 100826 / MSB8), this protein is Transaldolase (tal).